The primary structure comprises 949 residues: Translation initiation factor IF-2 (949 aa).

Disordered regions lie at residues 54-183 (FLKP…EAAP), 217-288 (LPAA…EVAL), and 305-357 (EVVA…EMQA). Composition is skewed to basic and acidic residues over residues 67 to 92 (DQEK…ERHI) and 101 to 164 (IEAK…EEAA). 2 stretches are compositionally biased toward low complexity: residues 165 to 183 (RAAA…EAAP) and 217 to 228 (LPAAAPAAPSAP). Composition is skewed to basic and acidic residues over residues 235–288 (PVEE…EVAL) and 330–339 (KYQDNEDRLQ). The region spanning 445–619 (TRPPVITVMG…EMLNLQSNPT (175 aa)) is the tr-type G domain. The interval 454–461 (GHVDHGKT) is G1. 454–461 (GHVDHGKT) is a GTP binding site. The G2 stretch occupies residues 479–483 (GITQH). The G3 stretch occupies residues 501–504 (DTPG). Residues 501-505 (DTPGH) and 555-558 (NKID) contribute to the GTP site. A G4 region spans residues 555–558 (NKID). The interval 591-593 (SAK) is G5.

The protein belongs to the TRAFAC class translation factor GTPase superfamily. Classic translation factor GTPase family. IF-2 subfamily.

The protein localises to the cytoplasm. In terms of biological role, one of the essential components for the initiation of protein synthesis. Protects formylmethionyl-tRNA from spontaneous hydrolysis and promotes its binding to the 30S ribosomal subunits. Also involved in the hydrolysis of GTP during the formation of the 70S ribosomal complex. This chain is Translation initiation factor IF-2, found in Magnetococcus marinus (strain ATCC BAA-1437 / JCM 17883 / MC-1).